The primary structure comprises 272 residues: Hemin import ATP-binding protein HmuV (272 aa).

In terms of domain architecture, ABC transporter spans 2-255 (LNADHLHVAR…EPIARCYGFR (254 aa)). 34–41 (GRNGAGKS) lines the ATP pocket.

This sequence belongs to the ABC transporter superfamily. Heme (hemin) importer (TC 3.A.1.14.5) family. The complex is composed of two ATP-binding proteins (HmuV), two transmembrane proteins (HmuU) and a solute-binding protein (HmuT).

Its subcellular location is the cell inner membrane. In terms of biological role, part of the ABC transporter complex HmuTUV involved in hemin import. Responsible for energy coupling to the transport system. The polypeptide is Hemin import ATP-binding protein HmuV (Burkholderia mallei (strain ATCC 23344)).